Consider the following 265-residue polypeptide: Ribonuclease 3 (265 aa).

An RNase III domain is found at leucine 34–glutamine 157. Glutamate 70 lines the Mg(2+) pocket. Aspartate 74 is a catalytic residue. Aspartate 143 and glutamate 146 together coordinate Mg(2+). Residue glutamate 146 is part of the active site. Residues aspartate 185–lysine 256 enclose the DRBM domain.

The protein belongs to the ribonuclease III family. As to quaternary structure, homodimer. Mg(2+) is required as a cofactor.

The protein resides in the cytoplasm. It catalyses the reaction Endonucleolytic cleavage to 5'-phosphomonoester.. In terms of biological role, digests double-stranded RNA. Involved in the processing of primary rRNA transcript to yield the immediate precursors to the large and small rRNAs (23S and 16S). Processes some mRNAs, and tRNAs when they are encoded in the rRNA operon. Processes pre-crRNA and tracrRNA of type II CRISPR loci if present in the organism. The protein is Ribonuclease 3 of Psychrobacter arcticus (strain DSM 17307 / VKM B-2377 / 273-4).